We begin with the raw amino-acid sequence, 356 residues long: MSL complex subunit 3B (356 aa).

One can recognise an MRG domain in the interval 2 to 350 (EERTVTLEIP…SEVHYSTRNP (349 aa)). 2 disordered regions span residues 135–210 (TNRS…WQQD) and 225–247 (KTPV…SPVF). The segment covering 142–156 (LSPSLRLLNPSRPQS) has biased composition (low complexity). Composition is skewed to polar residues over residues 178-189 (AVQSLRRSSPHT) and 229-243 (HSRS…SQEG).

Its subcellular location is the nucleus. Its function is as follows. Probable non-catalytic component of the MSL histone acetyltransferase complex, a multiprotein complex that mediates the majority of histone H4 acetylation at 'Lys-16' (H4K16ac), an epigenetic mark that prevents chromatin compaction. This Homo sapiens (Human) protein is MSL complex subunit 3B.